The chain runs to 795 residues: Protein translocase subunit SecA 2 (795 aa).

Residues Q84, 102-106 (GEGKT), and D496 each bind ATP.

It belongs to the SecA family. As to quaternary structure, monomer and homodimer. Part of the essential Sec protein translocation apparatus which comprises SecA, SecYEG and auxiliary proteins SecDF. Other proteins may also be involved.

Its subcellular location is the cell membrane. It is found in the cytoplasm. It catalyses the reaction ATP + H2O + cellular proteinSide 1 = ADP + phosphate + cellular proteinSide 2.. Its function is as follows. Part of the Sec protein translocase complex. Interacts with the SecYEG preprotein conducting channel. Has a central role in coupling the hydrolysis of ATP to the transfer of proteins into and across the cell membrane, serving as an ATP-driven molecular motor driving the stepwise translocation of polypeptide chains across the membrane. This is Protein translocase subunit SecA 2 from Streptococcus agalactiae serotype V (strain ATCC BAA-611 / 2603 V/R).